The chain runs to 187 residues: GTP cyclohydrolase 1 (187 aa).

Positions 76, 79, and 148 each coordinate Zn(2+).

The protein belongs to the GTP cyclohydrolase I family. Toroid-shaped homodecamer, composed of two pentamers of five dimers.

The enzyme catalyses GTP + H2O = 7,8-dihydroneopterin 3'-triphosphate + formate + H(+). It functions in the pathway cofactor biosynthesis; 7,8-dihydroneopterin triphosphate biosynthesis; 7,8-dihydroneopterin triphosphate from GTP: step 1/1. The chain is GTP cyclohydrolase 1 from Streptococcus suis (strain 98HAH33).